A 442-amino-acid chain; its full sequence is 3-isopropylmalate dehydratase large subunit (442 aa).

3 residues coordinate [4Fe-4S] cluster: cysteine 347, cysteine 407, and cysteine 410.

This sequence belongs to the aconitase/IPM isomerase family. LeuC type 1 subfamily. Heterodimer of LeuC and LeuD. [4Fe-4S] cluster is required as a cofactor.

It carries out the reaction (2R,3S)-3-isopropylmalate = (2S)-2-isopropylmalate. It functions in the pathway amino-acid biosynthesis; L-leucine biosynthesis; L-leucine from 3-methyl-2-oxobutanoate: step 2/4. Functionally, catalyzes the isomerization between 2-isopropylmalate and 3-isopropylmalate, via the formation of 2-isopropylmaleate. This is 3-isopropylmalate dehydratase large subunit from Buchnera aphidicola subsp. Uroleucon solidaginis.